Here is a 310-residue protein sequence, read N- to C-terminus: Beta-ketoacyl-[acyl-carrier-protein] synthase III (310 aa).

Active-site residues include C116 and H239. An ACP-binding region spans residues 240 to 244 (QANYR). N269 is an active-site residue.

Belongs to the thiolase-like superfamily. FabH family. Homodimer.

It localises to the cytoplasm. It carries out the reaction malonyl-[ACP] + acetyl-CoA + H(+) = 3-oxobutanoyl-[ACP] + CO2 + CoA. It participates in lipid metabolism; fatty acid biosynthesis. Functionally, catalyzes the condensation reaction of fatty acid synthesis by the addition to an acyl acceptor of two carbons from malonyl-ACP. Catalyzes the first condensation reaction which initiates fatty acid synthesis and may therefore play a role in governing the total rate of fatty acid production. Possesses both acetoacetyl-ACP synthase and acetyl transacylase activities. Its substrate specificity determines the biosynthesis of branched-chain and/or straight-chain of fatty acids. This is Beta-ketoacyl-[acyl-carrier-protein] synthase III from Acholeplasma laidlawii (strain PG-8A).